Reading from the N-terminus, the 172-residue chain is Single-stranded DNA-binding protein 2 (172 aa).

Residues 6–111 (VNKVILVGHI…VIVNVGGTMQ (106 aa)) form the SSB domain. Residues 55-61 (WHRVVVF) mediate DNA binding. The tract at residues 113-172 (LGRHNSQPQQEPQTPPTAAKGEGKAVKGAGNAAKGKNAAAPQQPPAQPDPAYDFDDDIPF) is disordered. Residues 119–153 (QPQQEPQTPPTAAKGEGKAVKGAGNAAKGKNAAAP) show a composition bias toward low complexity. The Important for interaction with partner proteins motif lies at 167 to 172 (DDDIPF).

As to quaternary structure, homotetramer.

In terms of biological role, plays an important role in DNA replication, recombination and repair. Binds to ssDNA and to an array of partner proteins to recruit them to their sites of action during DNA metabolism. This Salmonella typhimurium (strain LT2 / SGSC1412 / ATCC 700720) protein is Single-stranded DNA-binding protein 2 (ssb2).